A 310-amino-acid chain; its full sequence is Conjugation stage-specific protein (310 aa).

Belongs to the archaeal Rpo3/eukaryotic RPB3 RNA polymerase subunit family.

It localises to the nucleus. May be a stage-specific RNA polymerase subunit. This is Conjugation stage-specific protein (CNJC) from Tetrahymena thermophila.